A 293-amino-acid chain; its full sequence is 33 kDa chaperonin (293 aa).

2 disulfide bridges follow: Cys238–Cys240 and Cys271–Cys274.

Belongs to the HSP33 family. In terms of processing, under oxidizing conditions two disulfide bonds are formed involving the reactive cysteines. Under reducing conditions zinc is bound to the reactive cysteines and the protein is inactive.

The protein resides in the cytoplasm. Functionally, redox regulated molecular chaperone. Protects both thermally unfolding and oxidatively damaged proteins from irreversible aggregation. Plays an important role in the bacterial defense system toward oxidative stress. This is 33 kDa chaperonin from Staphylococcus epidermidis (strain ATCC 35984 / DSM 28319 / BCRC 17069 / CCUG 31568 / BM 3577 / RP62A).